Reading from the N-terminus, the 77-residue chain is Dermatoxin-DA1 (77 aa).

Residues 1-22 (MAFLKKSLFLVLFLGLVPLFLC) form the signal peptide. Positions 23-42 (ENEKREGENEKEENDDQSEE) are excised as a propeptide. K76 bears the Lysine amide mark.

The protein belongs to the frog skin active peptide (FSAP) family. Dermatoxin subfamily. As to expression, expressed by the skin glands.

The protein localises to the secreted. Functionally, possesses a potent antimicrobial activity against Gram-positive and Gram-negative bacteria. Probably acts by disturbing membrane functions with its amphipathic structure. The chain is Dermatoxin-DA1 from Agalychnis dacnicolor (Giant Mexican leaf frog).